Reading from the N-terminus, the 252-residue chain is F-box protein At5g39250 (252 aa).

Positions 1-42 (MFSEEVLKNVFPLLEGEDLASCMGVCKQWRDIARDDFYWKCQ) constitute an F-box domain.

The sequence is that of F-box protein At5g39250 from Arabidopsis thaliana (Mouse-ear cress).